Here is a 300-residue protein sequence, read N- to C-terminus: ETS homologous factor (300 aa).

Residues 29–115 (STCNVSSGFF…SNLQHLKWNG (87 aa)) form the PNT domain. A disordered region spans residues 183–202 (ESPDMKKEQDPPAKCHTKKH). The segment covering 185 to 195 (PDMKKEQDPPA) has biased composition (basic and acidic residues). Positions 207-289 (THLWEFIRDI…DGRRLVYKFG (83 aa)) form a DNA-binding region, ETS.

The protein belongs to the ETS family. Expressed exclusively in tissues with a high content of epithelial cells. Highly expressed in salivary gland, mammary gland, prostate, and lung. Weakly expressed in kidney and colon. Not detected in heart, brain, placenta, liver, skeletal muscle, spleen, thymus, testis, ovary, small intestine or peripheral blood leukocytes.

The protein resides in the nucleus. In terms of biological role, transcriptional activator that may play a role in regulating epithelial cell differentiation and proliferation. May act as a repressor for a specific subset of ETS/AP-1-responsive genes and as a modulator of the nuclear response to mitogen-activated protein kinase signaling cascades. Binds to DNA sequences containing the consensus nucleotide core sequence GGAA. Involved in regulation of TNFRSF10B/DR5 expression through Ets-binding sequences on the TNFRSF10B/DR5 promoter. May contribute to development and carcinogenesis by acting as a tumor suppressor gene or anti-oncogene. The protein is ETS homologous factor of Homo sapiens (Human).